The sequence spans 1423 residues: Guanine nucleotide exchange factor subunit RIC1 (1423 aa).

WD repeat units lie at residues 64 to 103 (TQFG…GDKY) and 304 to 343 (NKTG…LICT). The span at 437-448 (ASQTQNPRSSST) shows a compositional bias: polar residues. Residues 437–463 (ASQTQNPRSSSTHSEHKPSREKSPFAD) form a disordered region. Residues 449–460 (HSEHKPSREKSP) show a composition bias toward basic and acidic residues. A phosphothreonine mark is found at T992 and T996. 5 positions are modified to phosphoserine: S1015, S1017, S1019, S1037, and S1172. Residues 1355 to 1423 (PDAFQPITMG…QDGTYDCSVS (69 aa)) are disordered. The segment covering 1379–1397 (GSSSHGSIPQGEVGSSNMV) has biased composition (polar residues). The segment covering 1404-1413 (TAQAEEEEPF) has biased composition (acidic residues).

This sequence belongs to the RIC1 family. As to quaternary structure, forms a complex with RGP1; the interaction enhances RAB6A GTPase activity. Interacts (via central domain) with RGP1. Interacts with RAB6A; the interaction is direct with a preference for RAB6A-GDP. Interacts (via C-terminus domain) with RAB33B; the interaction is direct with a preference for RAB33B-GTP. Interacts with GJA1. As to expression, present in kidney and various cell lines (at protein level). Widely expressed at low level.

It localises to the cytoplasm. Its subcellular location is the cytosol. The protein localises to the membrane. Its function is as follows. The RIC1-RGP1 complex acts as a guanine nucleotide exchange factor (GEF), which activates RAB6A by exchanging bound GDP for free GTP, and may thereby be required for efficient fusion of endosome-derived vesicles with the Golgi compartment. The RIC1-RGP1 complex participates in the recycling of mannose-6-phosphate receptors. Required for phosphorylation and localization of GJA1. Is a regulator of procollagen transport and secretion, and is required for correct cartilage morphogenesis and development of the craniofacial skeleton. In Homo sapiens (Human), this protein is Guanine nucleotide exchange factor subunit RIC1.